Reading from the N-terminus, the 258-residue chain is Dihydroorotate dehydrogenase B (NAD(+)), electron transfer subunit (258 aa).

An FAD-binding FR-type domain is found at 2-100 (ILKENLTVVS…LGPQGNGFDL (99 aa)). FAD-binding positions include 51–54 (RPIS), 68–70 (IYR), and 75–76 (GT). 4 residues coordinate [2Fe-2S] cluster: Cys220, Cys225, Cys228, and Cys244.

The protein belongs to the PyrK family. Heterotetramer of 2 PyrK and 2 PyrD type B subunits. It depends on [2Fe-2S] cluster as a cofactor. Requires FAD as cofactor.

It participates in pyrimidine metabolism; UMP biosynthesis via de novo pathway; orotate from (S)-dihydroorotate (NAD(+) route): step 1/1. In terms of biological role, responsible for channeling the electrons from the oxidation of dihydroorotate from the FMN redox center in the PyrD type B subunit to the ultimate electron acceptor NAD(+). The chain is Dihydroorotate dehydrogenase B (NAD(+)), electron transfer subunit from Streptococcus mutans serotype c (strain ATCC 700610 / UA159).